Consider the following 531-residue polypeptide: Histone-arginine methyltransferase CARMER (531 aa).

An SAM-dependent MTase PRMT-type domain is found at 141-450 (ASQYFQFYGY…QSYDVTIDLH (310 aa)). Residues glutamine 154, arginine 163, glycine 187, glutamate 209, glutamate 238, and threonine 266 each coordinate S-adenosyl-L-methionine. Arginine 501 carries the post-translational modification Asymmetric dimethylarginine; by autocatalysis.

Belongs to the class I-like SAM-binding methyltransferase superfamily. Protein arginine N-methyltransferase family. In terms of assembly, homodimer. In terms of processing, the dimethylated protein is the major form.

It is found in the cytoplasm. It localises to the nucleus. The catalysed reaction is L-arginyl-[protein] + 2 S-adenosyl-L-methionine = N(omega),N(omega)-dimethyl-L-arginyl-[protein] + 2 S-adenosyl-L-homocysteine + 2 H(+). Methylates (mono- and asymmetric dimethylation) the guanidino nitrogens of arginyl residues in proteins. May methylate histone H3 at 'Arg-17' and activate transcription via chromatin remodeling. The protein is Histone-arginine methyltransferase CARMER (Art4) of Drosophila persimilis (Fruit fly).